The following is a 245-amino-acid chain: 14-3-3 protein theta (245 aa).

It belongs to the 14-3-3 family. Homodimer, and heterodimer with other family members.

It is found in the cytoplasm. Adapter protein implicated in the regulation of a large spectrum of both general and specialized signaling pathways. Binds to a large number of partners, usually by recognition of a phosphoserine or phosphothreonine motif. Binding generally results in the modulation of the activity of the binding partner. This is 14-3-3 protein theta (YWHAQ) from Gallus gallus (Chicken).